Reading from the N-terminus, the 305-residue chain is MNIRDLEYLVALAEHRHFRRAADSCHVSQPTLSGQIRKLEDELGVMLLERTSRKVLFTQAGLLLVEQARTVLREVKVLKEMASQQGEAMSGPLHIGLIPTVGPYLLPQIIPMLHRAFPKLEMYLHEAQTHQLLAQLDSGKLDCAILAMVKESEAFIEVPLFDEPMKLAIYQDHPWANRERVAMSDLSGEKLLMLEDGHCLRDQAMGFCFQAGADEDTHFRATSLETLRNMVAAGSGITLLPSLAVPQERIRDGVCYLPCYKPEPKRTIALVYRPGSPLRGRYEQLADSVREHMQLHMEKLSAQSA.

Positions Met-1 to Thr-58 constitute an HTH lysR-type domain. Residues Phe-18 to Arg-37 constitute a DNA-binding region (H-T-H motif).

Belongs to the LysR transcriptional regulatory family.

Required for the induction of a regulon of hydrogen peroxide inducible genes such as catalase and glutathione-reductase. The sequence is that of Hydrogen peroxide-inducible genes activator (oxyR) from Dickeya chrysanthemi (Pectobacterium chrysanthemi).